The chain runs to 617 residues: ATP-dependent RNA helicase DBP1 (617 aa).

Residues 1–90 (MADLPQKVSN…TSANYNRGGS (90 aa)) form a disordered region. Residues 7–17 (KVSNLSINNKE) are compositionally biased toward polar residues. A compositionally biased stretch (basic and acidic residues) spans 38-58 (PSFERSTPKQEDKVTGGDFFR). The span at 79-90 (GGTSANYNRGGS) shows a compositional bias: polar residues. A Q motif motif is present at residues 154–182 (LDFSSPPLDELLMENIKLASFTKPTPVQK). In terms of domain architecture, Helicase ATP-binding spans 185–374 (IPIVTKGRDL…RDFLDNYIFL (190 aa)). 198 to 205 (AQTGSGKT) provides a ligand contact to ATP. The short motif at 318–321 (DEAD) is the DEAD box element. One can recognise a Helicase C-terminal domain in the interval 385–545 (NITQRILYVD…EVPTFLSDLS (161 aa)). The tract at residues 542-617 (SDLSRQNSRG…GYGNSNASWW (76 aa)) is disordered. The segment covering 580 to 594 (FGSTRPRNTGTSNWG) has biased composition (polar residues).

Belongs to the DEAD box helicase family. DDX3/DED1 subfamily.

The protein localises to the cytoplasm. It carries out the reaction ATP + H2O = ADP + phosphate + H(+). Its function is as follows. ATP-binding RNA helicase involved in translation initiation. Remodels RNA in response to ADP and ATP concentrations by facilitating disruption, but also formation of RNA duplexes. Redundant to DED1, may be required in conditions in which DED1 expression is decreased. The sequence is that of ATP-dependent RNA helicase DBP1 (DBP1) from Saccharomyces cerevisiae (strain YJM789) (Baker's yeast).